The primary structure comprises 101 residues: Putative RNA-binding protein RbpA (101 aa).

Residues 2 to 79 form the RRM domain; the sequence is SIYVGNLSYD…RDLKVNKAKP (78 aa). Residues 73–83 are compositionally biased toward basic and acidic residues; that stretch reads KVNKAKPRENR. The interval 73-101 is disordered; it reads KVNKAKPRENRSGGGSFGGGRKSYGGSRY. Residues 84 to 101 are compositionally biased toward gly residues; sequence SGGGSFGGGRKSYGGSRY.

The sequence is that of Putative RNA-binding protein RbpA (rbpA) from Synechocystis sp. (strain ATCC 27184 / PCC 6803 / Kazusa).